The sequence spans 140 residues: Midkine (140 aa).

A signal peptide spans 1-20; sequence MQHRSFFLLALVALLAVTTA. Cystine bridges form between C34-C58, C42-C67, C49-C71, C81-C113, and C91-C123.

Belongs to the pleiotrophin family. As to quaternary structure, homodimer. Interacts with ALK. Interacts with LRP1; promotes neuronal survival. Interacts with LRP2. Interacts with NCAM1. Interacts (via C-terminal) with PTPRZ1 (via chondroitin sulfate chains); this interaction is inhibited by PTN; this interaction promotes neuronal migration. Interacts with NCL; this interaction promotes NCL clustering and lateral movements of this complex into lipid rafts leading to MDK internalization. Interacts with LRP6 and LRP8: this interaction is calcium dependent. Interacts with ITGA4. Interacts with ITGA6. Interacts with ITGB1. Interacts with ITGA4:ITGB1 complex; this interaction mediates MDK-induced osteoblast cells migration through PXN phosphorylation. Interacts with ITGA6:ITGB1 complex; this interaction mediates MDK-induced neurite outgrowth. Interacts with NOTCH2; this interactio mediates a nuclear accumulation of NOTCH2 and therefore activation of NOTCH2 signaling leading to interaction between HES1 and STAT3. Interacts with GPC2 (via heparan sulfate chain); this interaction is inhibited by heparin followed by chondroitin sulfate E; this interaction induces GPC2 clustering through heparan sulfate chain; this interaction induces neuronal cell adhesion and neurite outgrowth. Interacts with SDC3; this interaction induces SDC3 clustering; this interaction induces neuronal cell adhesion and neurite outgrowth. Interacts with SDC1. Interacts with CSPG5; this interaction promotes elongation of oligodendroglial precursor-like cells. Expressed at a low level in arteries, and at higher levels in newly formed neointima. In brain, expressed in the caudate nucleus and the brain stem.

The protein resides in the secreted. Developmentally regulated, secreted growth factor homologous to pleiotrophin (PTN), which has heparin binding activity. Binds anaplastic lymphoma kinase (ALK) which induces ALK activation and subsequent phosphorylation of the insulin receptor substrate (IRS1), followed by the activation of mitogen-activated protein kinase (MAPK) and PI3-kinase, and the induction of cell proliferation. Involved in neointima formation after arterial injury, possibly by mediating leukocyte recruitment. Also involved in early fetal adrenal gland development. In terms of biological role, secreted protein that functions as a cytokine and growth factor and mediates its signal through cell-surface proteoglycan and non-proteoglycan receptors. Binds cell-surface proteoglycan receptors via their chondroitin sulfate (CS) groups. Thereby regulates many processes like inflammatory response, cell proliferation, cell adhesion, cell growth, cell survival, tissue regeneration, cell differentiation and cell migration. Participates in inflammatory processes by exerting two different activities. Firstly, mediates neutrophils and macrophages recruitment to the sites of inflammation both by direct action by cooperating namely with ITGB2 via LRP1 and by inducing chemokine expression. This inflammation can be accompanied by epithelial cell survival and smooth muscle cell migration after renal and vessel damage, respectively. Secondly, suppresses the development of tolerogenic dendric cells thereby inhibiting the differentiation of regulatory T cells and also promote T cell expansion through NFAT signaling and Th1 cell differentiation. Promotes tissue regeneration after injury or trauma. After heart damage negatively regulates the recruitment of inflammatory cells and mediates cell survival through activation of anti-apoptotic signaling pathways via MAPKs and AKT pathways through the activation of angiogenesis. Also facilitates liver regeneration as well as bone repair by recruiting macrophage at trauma site and by promoting cartilage development by facilitating chondrocyte differentiation. Plays a role in brain by promoting neural precursor cells survival and growth through interaction with heparan sulfate proteoglycans. Binds PTPRZ1 and promotes neuronal migration and embryonic neurons survival. Binds SDC3 or GPC2 and mediates neurite outgrowth and cell adhesion. Binds chondroitin sulfate E and heparin leading to inhibition of neuronal cell adhesion induced by binding with GPC2. Binds CSPG5 and promotes elongation of oligodendroglial precursor-like cells. Also binds ITGA6:ITGB1 complex; this interaction mediates MDK-induced neurite outgrowth. Binds LRP1; promotes neuronal survival. Binds ITGA4:ITGB1 complex; this interaction mediates MDK-induced osteoblast cells migration through PXN phosphorylation. Binds anaplastic lymphoma kinase (ALK) which induces ALK activation and subsequent phosphorylation of the insulin receptor substrate (IRS1), followed by the activation of mitogen-activated protein kinase (MAPK) and PI3-kinase, and the induction of cell proliferation. Promotes epithelial to mesenchymal transition through interaction with NOTCH2. During arteriogenesis, plays a role in vascular endothelial cell proliferation by inducing VEGFA expression and release which in turn induces nitric oxide synthase expression. Moreover activates vasodilation through nitric oxide synthase activation. Negatively regulates bone formation in response to mechanical load by inhibiting Wnt/beta-catenin signaling in osteoblasts. In addition plays a role in hippocampal development, working memory, auditory response, early fetal adrenal gland development and the female reproductive system. The sequence is that of Midkine from Rattus norvegicus (Rat).